The primary structure comprises 568 residues: Protein yellow (568 aa).

Residues 1-28 form the signal peptide; sequence MHAQDKGGVLPGLSLLLIAVAMVCPSQA. N-linked (GlcNAc...) asparagine glycosylation is found at Asn151 and Asn222.

Belongs to the major royal jelly protein family.

The protein resides in the secreted. Functionally, controls the pigmentation pattern of the adult cuticle and larval mouth parts. The protein is Protein yellow (y) of Drosophila guanche (Fruit fly).